Reading from the N-terminus, the 388-residue chain is Mannitol-1-phosphate 5-dehydrogenase (388 aa).

4-15 (AVHFGAGNIGRG) provides a ligand contact to NAD(+).

This sequence belongs to the mannitol dehydrogenase family.

It catalyses the reaction D-mannitol 1-phosphate + NAD(+) = beta-D-fructose 6-phosphate + NADH + H(+). The chain is Mannitol-1-phosphate 5-dehydrogenase from Lactococcus lactis subsp. cremoris (strain SK11).